The following is a 1219-amino-acid chain: NHS-like protein 2 (1219 aa).

Disordered regions lie at residues 162 to 181 (FRSS…QSAK), 288 to 321 (FSNF…HSAP), 336 to 364 (FPSL…SDHP), 400 to 423 (TPSA…GNSW), 474 to 591 (GLLA…ELVL), 669 to 741 (QGSS…SASV), 854 to 938 (GAEE…STAS), 979 to 1003 (IGLQ…KKPS), 1033 to 1087 (LEED…DKTA), and 1121 to 1197 (WKET…KTTN). Over residues 288 to 312 (FSNFSQRDQGHSSSPTGSLARSATS) the composition is skewed to polar residues. Residues 352–364 (GDAHQARSASDHP) are compositionally biased toward basic and acidic residues. S499 carries the post-translational modification Phosphoserine. The span at 526–545 (ASTSSEGSNSTDNIAALSTE) shows a compositional bias: polar residues. Over residues 549 to 567 (RHRRQRSKSISLKKAKKKP) the composition is skewed to basic residues. S575 is subject to Phosphoserine. The span at 674–687 (SLASPSTSRATTPS) shows a compositional bias: low complexity. S690 is modified (phosphoserine). Composition is skewed to polar residues over residues 708-729 (MSPS…SMSL) and 897-908 (TSPTMAMASRSS). Phosphoserine is present on S1048. Residues 1076-1087 (AEEKSLISDKTA) show a composition bias toward basic and acidic residues. Residues 1131-1144 (SKPSSHSPVKNTAD) show a composition bias toward polar residues. Low complexity predominate over residues 1145-1160 (SPTGEAAAAPGPSSSA). The residue at position 1208 (S1208) is a Phosphoserine.

Belongs to the NHS family.

This is NHS-like protein 2 from Mus musculus (Mouse).